We begin with the raw amino-acid sequence, 154 residues long: ATP synthase subunit b', chloroplastic (154 aa).

The chain crosses the membrane as a helical span at residues 22-42 (GTLPLIAIQFLILMFLLNILL).

The protein belongs to the ATPase B chain family. As to quaternary structure, F-type ATPases have 2 components, F(1) - the catalytic core - and F(0) - the membrane proton channel. F(1) has five subunits: alpha(3), beta(3), gamma(1), delta(1), epsilon(1). F(0) has four main subunits: a(1), b(1), b'(1) and c(10-14). The alpha and beta chains form an alternating ring which encloses part of the gamma chain. F(1) is attached to F(0) by a central stalk formed by the gamma and epsilon chains, while a peripheral stalk is formed by the delta, b and b' chains.

It localises to the plastid. The protein resides in the chloroplast thylakoid membrane. F(1)F(0) ATP synthase produces ATP from ADP in the presence of a proton or sodium gradient. F-type ATPases consist of two structural domains, F(1) containing the extramembraneous catalytic core and F(0) containing the membrane proton channel, linked together by a central stalk and a peripheral stalk. During catalysis, ATP synthesis in the catalytic domain of F(1) is coupled via a rotary mechanism of the central stalk subunits to proton translocation. In terms of biological role, component of the F(0) channel, it forms part of the peripheral stalk, linking F(1) to F(0). The b'-subunit is a diverged and duplicated form of b found in plants and photosynthetic bacteria. This is ATP synthase subunit b', chloroplastic from Vaucheria litorea (Yellow-green alga).